We begin with the raw amino-acid sequence, 323 residues long: Pathogenicity locus probable regulatory protein WtsA (323 aa).

Positions 41–251 (VAPLEIDLVL…ELKTAAKRFT (211 aa)) constitute a Sigma-54 factor interaction domain. Residues 52–59 (GETGTGKD) and 123–132 (EIDSMPLSLQ) each bind ATP. Positions 293-312 (IDEAAMELGMPLRTLYHRIK) form a DNA-binding region, H-T-H motif.

Positive activator of wtsB involved in plant pathogenicity. Probably interacts with sigma-54. The protein is Pathogenicity locus probable regulatory protein WtsA (wtsA) of Pantoea stewartii subsp. stewartii (Erwinia stewartii).